We begin with the raw amino-acid sequence, 70 residues long: Cold shock-like protein CspG (70 aa).

Residues 7-67 (GLVKWFNEEK…GQKGLQAANV (61 aa)) form the CSD domain.

It is found in the cytoplasm. This chain is Cold shock-like protein CspG (cspG), found in Shewanella violacea (strain JCM 10179 / CIP 106290 / LMG 19151 / DSS12).